Here is a 775-residue protein sequence, read N- to C-terminus: Kinesin-like protein KIF3B (775 aa).

The Kinesin motor domain occupies 9-341; sequence SVKVVVRCRP…LRYANRAKNI (333 aa). An ATP-binding site is contributed by 97–104; it reads GQTGTGKT. The disordered stretch occupies residues 372–419; sequence KRSGRKRRRRRRRRVGEGGEEFEDGEDEEDDDDDDEDEEEGVDADKNI. The span at 374 to 385 shows a compositional bias: basic residues; that stretch reads SGRKRRRRRRRR. The span at 389 to 413 shows a compositional bias: acidic residues; that stretch reads GGEEFEDGEDEEDDDDDDEDEEEGV. Residues 501–591 adopt a coiled-coil conformation; that stretch reads LELKRQEIAE…QNELTRELKL (91 aa). The segment at 716 to 775 is disordered; it reads FHASLGSSPGLSASAAGFSKKPKSGRPKTGKKVSTPTSAHSPLSGSGSPLYPQSRGLVPK. Residues 718 to 734 are compositionally biased toward low complexity; sequence ASLGSSPGLSASAAGFS. The segment covering 735 to 746 has biased composition (basic residues); sequence KKPKSGRPKTGK. The segment covering 756-765 has biased composition (low complexity); that stretch reads SPLSGSGSPL.

Belongs to the TRAFAC class myosin-kinesin ATPase superfamily. Kinesin family. As to quaternary structure, heterodimer of KIF3A and KIF3B. KIF3A/KIF3B heterodimer interacts with KIFAP3 forming a heterotrimeric (KIF3A/KIF3B/KIFAP3) complex.

The protein localises to the cytoplasm. It is found in the cytoskeleton. The protein resides in the cell projection. It localises to the cilium. Its subcellular location is the dendritic spine. In terms of biological role, microtubule-based molecular motor that transport intracellular cargos, such as vesicles, organelles and protein complexes. Uses ATP hydrolysis to generate force to bind and move along the microtubule. Plays a role in cilia formation. Required for photoreceptor development. The protein is Kinesin-like protein KIF3B of Danio rerio (Zebrafish).